A 195-amino-acid chain; its full sequence is Protein GrpE (195 aa).

Residues 1-18 (MDPKEKKTKQEEELKVDD) are compositionally biased toward basic and acidic residues. Residues 1–41 (MDPKEKKTKQEEELKVDDIQDTVEGQSQNEEATEATEPLTA) are disordered.

Belongs to the GrpE family. In terms of assembly, homodimer.

The protein resides in the cytoplasm. Participates actively in the response to hyperosmotic and heat shock by preventing the aggregation of stress-denatured proteins, in association with DnaK and GrpE. It is the nucleotide exchange factor for DnaK and may function as a thermosensor. Unfolded proteins bind initially to DnaJ; upon interaction with the DnaJ-bound protein, DnaK hydrolyzes its bound ATP, resulting in the formation of a stable complex. GrpE releases ADP from DnaK; ATP binding to DnaK triggers the release of the substrate protein, thus completing the reaction cycle. Several rounds of ATP-dependent interactions between DnaJ, DnaK and GrpE are required for fully efficient folding. The sequence is that of Protein GrpE from Bacteroides fragilis (strain ATCC 25285 / DSM 2151 / CCUG 4856 / JCM 11019 / LMG 10263 / NCTC 9343 / Onslow / VPI 2553 / EN-2).